The primary structure comprises 111 residues: Large ribosomal subunit protein eL34B (111 aa).

Residue Y76 is modified to Phosphotyrosine.

Belongs to the eukaryotic ribosomal protein eL34 family. As to quaternary structure, component of the large ribosomal subunit (LSU). Mature yeast ribosomes consist of a small (40S) and a large (60S) subunit. The 40S small subunit contains 1 molecule of ribosomal RNA (18S rRNA) and at least 33 different proteins. The large 60S subunit contains 3 rRNA molecules (25S, 5.8S and 5S rRNA) and at least 46 different proteins.

Its subcellular location is the cytoplasm. The protein resides in the nucleus. It is found in the nucleolus. Functionally, component of the ribosome, a large ribonucleoprotein complex responsible for the synthesis of proteins in the cell. The small ribosomal subunit (SSU) binds messenger RNAs (mRNAs) and translates the encoded message by selecting cognate aminoacyl-transfer RNA (tRNA) molecules. The large subunit (LSU) contains the ribosomal catalytic site termed the peptidyl transferase center (PTC), which catalyzes the formation of peptide bonds, thereby polymerizing the amino acids delivered by tRNAs into a polypeptide chain. The nascent polypeptides leave the ribosome through a tunnel in the LSU and interact with protein factors that function in enzymatic processing, targeting, and the membrane insertion of nascent chains at the exit of the ribosomal tunnel. The protein is Large ribosomal subunit protein eL34B (rpl3402) of Schizosaccharomyces pombe (strain 972 / ATCC 24843) (Fission yeast).